Reading from the N-terminus, the 520-residue chain is Peptide chain release factor 3 (520 aa).

The tr-type G domain occupies 8-277 (ESRKTFAIIS…FAPMPNARQT (270 aa)). GTP-binding positions include 17-24 (SHPDAGKT), 85-89 (DTPGH), and 139-142 (NKLD).

This sequence belongs to the TRAFAC class translation factor GTPase superfamily. Classic translation factor GTPase family. PrfC subfamily.

Its subcellular location is the cytoplasm. In terms of biological role, increases the formation of ribosomal termination complexes and stimulates activities of RF-1 and RF-2. It binds guanine nucleotides and has strong preference for UGA stop codons. It may interact directly with the ribosome. The stimulation of RF-1 and RF-2 is significantly reduced by GTP and GDP, but not by GMP. This is Peptide chain release factor 3 from Staphylococcus aureus (strain JH1).